The primary structure comprises 81 residues: Small cysteine-rich protein 1 2 (81 aa).

A signal peptide spans 1-19; sequence MGVNFNICLLLLLVATISS. Positions 20–39 are excised as a propeptide; it reads QPLKATEKDDSTDENPFGIY.

This sequence belongs to the Cnidaria small cysteine-rich protein (SCRiP) family. alpha subfamily. Post-translationally, the basic myotoxic domain of rattlesnake crotamine toxins (with 6 Cys residues) has been detected in this protein. However, this protein contains 2 additional Cys at the C-terminal region. Hence, this protein may contain 4 disulfide bonds instead of the 3 suggested by the myotoxin domain.

The protein localises to the secreted. Its subcellular location is the nematocyst. Functionally, induces neurotoxic symptoms on zebrafish. Has also been claimed to be implied in calcification, but tests on homolog proteins suggest that proteins of this family have a neurotoxic function and not a calcification function. The protein is Small cysteine-rich protein 1 2 of Montipora capitata (Rice coral).